An 874-amino-acid chain; its full sequence is Translation initiation factor IF-2 (874 aa).

The tract at residues 1 to 262 (MEDKNKTIKE…EKSTSDRDFS (262 aa)) is disordered. Residues 54–63 (SKPPVMPLPL) are compositionally biased toward pro residues. A compositionally biased stretch (basic and acidic residues) spans 83–104 (AKREESPGKQDAGRPPRDKDTR). Gly residues predominate over residues 141–222 (SGGGYQGNRG…NRGPRSGGTG (82 aa)). Polar residues predominate over residues 235–244 (LSQSRGSSVT). A compositionally biased stretch (basic and acidic residues) spans 250 to 262 (HDKEKSTSDRDFS). Positions 369–538 (NRPPVVTIMG…LLQAEVMDLK (170 aa)) constitute a tr-type G domain. Residues 378-385 (GHVDHGKT) are G1. 378–385 (GHVDHGKT) serves as a coordination point for GTP. The G2 stretch occupies residues 403–407 (GITQH). Residues 424-427 (DTPG) form a G3 region. Residues 424–428 (DTPGH) and 478–481 (NKID) each bind GTP. Residues 478 to 481 (NKID) form a G4 region. A G5 region spans residues 514–516 (SAR).

The protein belongs to the TRAFAC class translation factor GTPase superfamily. Classic translation factor GTPase family. IF-2 subfamily.

The protein resides in the cytoplasm. Its function is as follows. One of the essential components for the initiation of protein synthesis. Protects formylmethionyl-tRNA from spontaneous hydrolysis and promotes its binding to the 30S ribosomal subunits. Also involved in the hydrolysis of GTP during the formation of the 70S ribosomal complex. This chain is Translation initiation factor IF-2, found in Leptospira interrogans serogroup Icterohaemorrhagiae serovar copenhageni (strain Fiocruz L1-130).